Consider the following 56-residue polypeptide: Large ribosomal subunit protein bL32 (56 aa).

Residues 1-37 are disordered; sequence MAVQQNKKSRSRRDMRRSHDALTTAAVSVDKTTGETH. Positions 7-16 are enriched in basic residues; that stretch reads KKSRSRRDMR.

It belongs to the bacterial ribosomal protein bL32 family.

In Haemophilus ducreyi (strain 35000HP / ATCC 700724), this protein is Large ribosomal subunit protein bL32.